Reading from the N-terminus, the 241-residue chain is 1-(5-phosphoribosyl)-5-[(5-phosphoribosylamino)methylideneamino] imidazole-4-carboxamide isomerase (241 aa).

Asp10 serves as the catalytic Proton acceptor. Asp129 (proton donor) is an active-site residue.

It belongs to the HisA/HisF family.

It localises to the cytoplasm. The enzyme catalyses 1-(5-phospho-beta-D-ribosyl)-5-[(5-phospho-beta-D-ribosylamino)methylideneamino]imidazole-4-carboxamide = 5-[(5-phospho-1-deoxy-D-ribulos-1-ylimino)methylamino]-1-(5-phospho-beta-D-ribosyl)imidazole-4-carboxamide. It participates in amino-acid biosynthesis; L-histidine biosynthesis; L-histidine from 5-phospho-alpha-D-ribose 1-diphosphate: step 4/9. The chain is 1-(5-phosphoribosyl)-5-[(5-phosphoribosylamino)methylideneamino] imidazole-4-carboxamide isomerase from Salinispora tropica (strain ATCC BAA-916 / DSM 44818 / JCM 13857 / NBRC 105044 / CNB-440).